Consider the following 69-residue polypeptide: Putative membrane protein insertion efficiency factor (69 aa).

Belongs to the UPF0161 family.

The protein resides in the cell membrane. Could be involved in insertion of integral membrane proteins into the membrane. In Clostridium botulinum (strain Okra / Type B1), this protein is Putative membrane protein insertion efficiency factor.